A 418-amino-acid polypeptide reads, in one-letter code: Tyrosine--tRNA ligase (418 aa).

Position 34 (Y34) interacts with L-tyrosine. The 'HIGH' region motif lies at 39–48; sequence PTADSLHLGH. L-tyrosine-binding residues include Y169 and Q173. The 'KMSKS' region signature appears at 229–233; sequence KFGKS. An ATP-binding site is contributed by K232. Residues 352–418 enclose the S4 RNA-binding domain; it reads LNLVDMLVTA…GKKKYAVLTY (67 aa).

This sequence belongs to the class-I aminoacyl-tRNA synthetase family. TyrS type 1 subfamily. Homodimer.

Its subcellular location is the cytoplasm. The enzyme catalyses tRNA(Tyr) + L-tyrosine + ATP = L-tyrosyl-tRNA(Tyr) + AMP + diphosphate + H(+). In terms of biological role, catalyzes the attachment of tyrosine to tRNA(Tyr) in a two-step reaction: tyrosine is first activated by ATP to form Tyr-AMP and then transferred to the acceptor end of tRNA(Tyr). In Streptococcus pyogenes serotype M12 (strain MGAS2096), this protein is Tyrosine--tRNA ligase.